The following is a 213-amino-acid chain: Thymidylate kinase (213 aa).

9 to 16 contributes to the ATP binding site; the sequence is GIEGCGKT.

This sequence belongs to the thymidylate kinase family.

The enzyme catalyses dTMP + ATP = dTDP + ADP. Functionally, phosphorylation of dTMP to form dTDP in both de novo and salvage pathways of dTTP synthesis. The polypeptide is Thymidylate kinase (Geobacter sulfurreducens (strain ATCC 51573 / DSM 12127 / PCA)).